A 325-amino-acid chain; its full sequence is GTP 3',8-cyclase (325 aa).

The region spanning threonine 4–leucine 219 is the Radical SAM core domain. Arginine 13 provides a ligand contact to GTP. The [4Fe-4S] cluster site is built by cysteine 20 and cysteine 24. Tyrosine 26 is a binding site for S-adenosyl-L-methionine. Residue cysteine 27 participates in [4Fe-4S] cluster binding. Residue arginine 63 coordinates GTP. Glycine 67 serves as a coordination point for S-adenosyl-L-methionine. Threonine 94 provides a ligand contact to GTP. Serine 118 is a binding site for S-adenosyl-L-methionine. Lysine 155 serves as a coordination point for GTP. Methionine 189 contributes to the S-adenosyl-L-methionine binding site. Cysteine 254 and cysteine 257 together coordinate [4Fe-4S] cluster. GTP is bound at residue arginine 259–arginine 261. Cysteine 271 is a [4Fe-4S] cluster binding site.

This sequence belongs to the radical SAM superfamily. MoaA family. Monomer and homodimer. [4Fe-4S] cluster serves as cofactor.

It catalyses the reaction GTP + AH2 + S-adenosyl-L-methionine = (8S)-3',8-cyclo-7,8-dihydroguanosine 5'-triphosphate + 5'-deoxyadenosine + L-methionine + A + H(+). It participates in cofactor biosynthesis; molybdopterin biosynthesis. Its function is as follows. Catalyzes the cyclization of GTP to (8S)-3',8-cyclo-7,8-dihydroguanosine 5'-triphosphate. This is GTP 3',8-cyclase from Pelotomaculum thermopropionicum (strain DSM 13744 / JCM 10971 / SI).